The following is a 342-amino-acid chain: Ketol-acid reductoisomerase (NADP(+)) (342 aa).

In terms of domain architecture, KARI N-terminal Rossmann spans 2-182; it reads AKIYYDDDAD…GGLRAGGIET (181 aa). Residues 25–28, Arg-48, Ser-51, Ser-53, and 83–86 each bind NADP(+); these read YGSQ and DQNQ. The active site involves His-108. Gly-134 is a binding site for NADP(+). A KARI C-terminal knotted domain is found at 183-328; it reads SFREETETDL…KELRKMYSWL (146 aa). 4 residues coordinate Mg(2+): Asp-191, Glu-195, Glu-227, and Glu-231. Ser-252 contacts substrate.

Belongs to the ketol-acid reductoisomerase family. Mg(2+) is required as a cofactor.

The enzyme catalyses (2R)-2,3-dihydroxy-3-methylbutanoate + NADP(+) = (2S)-2-acetolactate + NADPH + H(+). It carries out the reaction (2R,3R)-2,3-dihydroxy-3-methylpentanoate + NADP(+) = (S)-2-ethyl-2-hydroxy-3-oxobutanoate + NADPH + H(+). The protein operates within amino-acid biosynthesis; L-isoleucine biosynthesis; L-isoleucine from 2-oxobutanoate: step 2/4. Its pathway is amino-acid biosynthesis; L-valine biosynthesis; L-valine from pyruvate: step 2/4. In terms of biological role, involved in the biosynthesis of branched-chain amino acids (BCAA). Catalyzes an alkyl-migration followed by a ketol-acid reduction of (S)-2-acetolactate (S2AL) to yield (R)-2,3-dihydroxy-isovalerate. In the isomerase reaction, S2AL is rearranged via a Mg-dependent methyl migration to produce 3-hydroxy-3-methyl-2-ketobutyrate (HMKB). In the reductase reaction, this 2-ketoacid undergoes a metal-dependent reduction by NADPH to yield (R)-2,3-dihydroxy-isovalerate. The chain is Ketol-acid reductoisomerase (NADP(+)) from Cutibacterium acnes (strain DSM 16379 / KPA171202) (Propionibacterium acnes).